Consider the following 441-residue polypeptide: MQKVAIVGRPNVGKSSLFNRLVGRREAVVADFPGVTRDAKEGLMLYHNHRIVLVDTGGLWSGDEWEQAIREKAEWAMEGAQAVIFVVDPREGLTAADYEVADWLRRLGKPVIVAANKIDSPKHDVYLAELWGLGFGDPVAISAEHARGLDDLMERVMAHLPADEEDVPEVAPIRISLIGRPNVGKSSLLNAITQSERAIVADQPGTTRDSLDVEWNYGGQRFVLVDTAGIRKKPDTAIEEYAIQRSEAAIERSDIIWLVVNATEIGDHELKLANLAYDSGKPVIVVVNKWDLVPDEALKQTEKELNQKLHHIAYAPRVYTSAINDYGIHDMLAEAMKLYEKWQSRIPTAELNRWLEIWQMRQAVPNFHGKPLKMYFMTQVETAPPTFAIFCNRADFVTRAYEGFLQNRIREDLGLAGIPVRLKWKEKGPYKKGKKGEEAEA.

EngA-type G domains are found at residues 2-164 and 173-343; these read QKVA…PADE and IRIS…EKWQ. Residues 8-15, 55-59, 116-119, 179-186, 226-230, and 288-291 each bind GTP; these read GRPNVGKS, DTGGL, NKID, DTAGI, and NKWD. A KH-like domain is found at 344–428; it reads SRIPTAELNR…PVRLKWKEKG (85 aa).

The protein belongs to the TRAFAC class TrmE-Era-EngA-EngB-Septin-like GTPase superfamily. EngA (Der) GTPase family. In terms of assembly, associates with the 50S ribosomal subunit.

Functionally, GTPase that plays an essential role in the late steps of ribosome biogenesis. In Deinococcus geothermalis (strain DSM 11300 / CIP 105573 / AG-3a), this protein is GTPase Der.